Here is a 364-residue protein sequence, read N- to C-terminus: tRNA 2-selenouridine synthase (364 aa).

The 124-residue stretch at 14 to 137 (LIADTPIIDV…LRQTAIQATI (124 aa)) folds into the Rhodanese domain. The active-site S-selanylcysteine intermediate is the C97.

The protein belongs to the SelU family. As to quaternary structure, monomer.

It carries out the reaction 5-methylaminomethyl-2-thiouridine(34) in tRNA + selenophosphate + (2E)-geranyl diphosphate + H2O + H(+) = 5-methylaminomethyl-2-selenouridine(34) in tRNA + (2E)-thiogeraniol + phosphate + diphosphate. It catalyses the reaction 5-methylaminomethyl-2-thiouridine(34) in tRNA + (2E)-geranyl diphosphate = 5-methylaminomethyl-S-(2E)-geranyl-thiouridine(34) in tRNA + diphosphate. The enzyme catalyses 5-methylaminomethyl-S-(2E)-geranyl-thiouridine(34) in tRNA + selenophosphate + H(+) = 5-methylaminomethyl-2-(Se-phospho)selenouridine(34) in tRNA + (2E)-thiogeraniol. The catalysed reaction is 5-methylaminomethyl-2-(Se-phospho)selenouridine(34) in tRNA + H2O = 5-methylaminomethyl-2-selenouridine(34) in tRNA + phosphate. Its function is as follows. Involved in the post-transcriptional modification of the uridine at the wobble position (U34) of tRNA(Lys), tRNA(Glu) and tRNA(Gln). Catalyzes the conversion of 2-thiouridine (S2U-RNA) to 2-selenouridine (Se2U-RNA). Acts in a two-step process involving geranylation of 2-thiouridine (S2U) to S-geranyl-2-thiouridine (geS2U) and subsequent selenation of the latter derivative to 2-selenouridine (Se2U) in the tRNA chain. This chain is tRNA 2-selenouridine synthase, found in Escherichia coli (strain SE11).